A 256-amino-acid chain; its full sequence is 1-(5-phosphoribosyl)-5-[(5-phosphoribosylamino)methylideneamino] imidazole-4-carboxamide isomerase (256 aa).

Catalysis depends on aspartate 8, which acts as the Proton acceptor. The active-site Proton donor is the aspartate 130.

The protein belongs to the HisA/HisF family.

It is found in the cytoplasm. It catalyses the reaction 1-(5-phospho-beta-D-ribosyl)-5-[(5-phospho-beta-D-ribosylamino)methylideneamino]imidazole-4-carboxamide = 5-[(5-phospho-1-deoxy-D-ribulos-1-ylimino)methylamino]-1-(5-phospho-beta-D-ribosyl)imidazole-4-carboxamide. Its pathway is amino-acid biosynthesis; L-histidine biosynthesis; L-histidine from 5-phospho-alpha-D-ribose 1-diphosphate: step 4/9. The polypeptide is 1-(5-phosphoribosyl)-5-[(5-phosphoribosylamino)methylideneamino] imidazole-4-carboxamide isomerase (Chlorobium luteolum (strain DSM 273 / BCRC 81028 / 2530) (Pelodictyon luteolum)).